Consider the following 465-residue polypeptide: MENQCLPKKVPGFCSFRYGLAILLHFCNIAIMAQRVCLNLTMVAMVNNTGSPHLSNESVVEMLDNVKNPVYSWSPDIQGLILSSVFFGMVVVQAPVGYLSGIYPMKRIIGSSLFLSSLMSLLLPPAAQVGAALVIVCRVLQGIAQGTVSTGQHEIWVKWAPPLERGRLTSMTLSGFVMGPFIVLLVSGFICDLLGWPMVFYIFGIVGCVLSLSWFFLFFDDPKDHPYMSSSEKDYIISSLMQQASSGRQSLPIKAMLKSLPLWAIILNSFAFIWSNSLLVTYTPTFISTVLHVNVRENGLLSSLPYLLAYICGILAGQMSDFFLTRKIFSIVTVRKLFTTLGSFCPVIFIMCLLYLSYNFYSTVIFLTLANSTLSFSYCGQLINALDIAPRYYGFLKAVTALIGMFGGLISSTLAGLILNQDPEYAWHKIFFLMAGINVTCLVFYFLFAKGEIQDWAKEIKTTRL.

Residues N39, N47, and N56 are each glycosylated (N-linked (GlcNAc...) asparagine). A run of 10 helical transmembrane segments spans residues 79–99 (GLIL…VGYL), 117–137 (SLMS…VIVC), 176–196 (FVMG…LLGW), 199–219 (VFYI…FLFF), 260–280 (LPLW…SLLV), 304–324 (LPYL…DFFL), 337–356 (LFTT…LLYL), 363–383 (TVIF…GQLI), 399–419 (VTAL…GLIL), and 429–449 (KIFF…FLFA).

It belongs to the major facilitator superfamily. Sodium/anion cotransporter family. Interacts with PDZK1. In terms of tissue distribution, kidney.

The protein resides in the apical cell membrane. The enzyme catalyses 3 Na(+)(out) + phosphate(out) = 3 Na(+)(in) + phosphate(in). It catalyses the reaction urate(out) = urate(in). In terms of biological role, important for the resorption of phosphate by the kidney. May be involved in actively transporting phosphate into cells via Na(+) cotransport in the renal brush border membrane. Plays a role in urate transport in the kidney. This is Sodium-dependent phosphate transport protein 1 (Slc17a1) from Mus musculus (Mouse).